The following is a 585-amino-acid chain: Optineurin (585 aa).

Residues 1-32 (MSHQPLSCLTEKGDSSCETPGNGPSNMVHPNL) are disordered. Polar residues predominate over residues 16–25 (SCETPGNGPS). Residues 38–181 (EELLQQMKEL…VSELQLKLNS (144 aa)) are a coiled coil. Positions 58 to 220 (MKLNNQAMKG…GPTRTDSISM (163 aa)) are interaction with Rab8. Residues 187–192 (DSFVEI) carry the LIR motif. Ser-188 and Ser-209 each carry phosphoserine. Disordered stretches follow at residues 200 to 220 (EGAM…SISM) and 269 to 299 (FEKK…PESV). Residues 244–512 (CLREGNQKVE…LLKENNDFED (269 aa)) adopt a coiled-coil conformation. A Phosphoserine modification is found at Ser-346. Positions 415-585 (TKQQAEKVDK…LQIHVMDCII (171 aa)) are interaction with HD. Residues 416–525 (KQQAEKVDKV…RQSLMEMQCR (110 aa)) are interaction with MYO6. Positions 478-483 (DFHAER) match the UBAN motif. Ser-531 carries the phosphoserine modification. The CCHC NOA-type zinc-finger motif lies at 555 to 585 (PRSIPIHSCPKCGEVLPDIDTLQIHVMDCII). Zn(2+) contacts are provided by Cys-563, Cys-566, His-579, and Cys-583.

Self-associates. Interacts with HD. Interacts with GTF3A. Interacts with MYO6. Interacts (via UBAN) with ubiquitinated TFRC. Interacts with GTP-bound Rab8 (RAB8A and/or RAB8B). Interacts with TBC1D17. Interacts with TBK1. Interacts with TRAF3. Binds to linear ubiquitin chains. Interacts with LC3 family members MAP1LC3A, MAP1LC3B, GABARAP, GABARAPL1 and GABARAPL2; OPTN phosphorylation increases the association (at least with MAP1LC3B). Interacts with RAB12; the interaction may be indirect. Interacts with TBK1; this interaction leads to the Golgi localization of TBK1 and its subsequent activation. Interacts with palmitoyltransferase ZDHHC17/HIP14; the interaction does not lead to palmitoylation of OPTN. Interacts with CYLD. Interacts with TOM1; the interaction is indirect and is mediated by MYO6, which acts as a bridge between TOM1 and OPTN. Interacts with USP12; the interaction is independent of USP12 deubiquitinase activity and may be involved in regulation of autophagic flux. In terms of processing, phosphorylated by TBK1, leading to restrict bacterial proliferation in case of infection.

It is found in the cytoplasm. It localises to the perinuclear region. The protein localises to the golgi apparatus. Its subcellular location is the trans-Golgi network. The protein resides in the cytoplasmic vesicle. It is found in the autophagosome. It localises to the recycling endosome. Plays an important role in the maintenance of the Golgi complex, in membrane trafficking, in exocytosis, through its interaction with myosin VI and Rab8. Links myosin VI to the Golgi complex and plays an important role in Golgi ribbon formation. Negatively regulates the induction of IFNB in response to RNA virus infection. Plays a neuroprotective role in the eye and optic nerve. Probably part of the TNF-alpha signaling pathway that can shift the equilibrium toward induction of cell death. May act by regulating membrane trafficking and cellular morphogenesis via a complex that contains Rab8 and huntingtin (HD). Mediates the interaction of Rab8 with the probable GTPase-activating protein TBC1D17 during Rab8-mediated endocytic trafficking, such as that of transferrin receptor (TFRC/TfR); regulates Rab8 recruitment to tubules emanating from the endocytic recycling compartment. Autophagy receptor that interacts directly with both the cargo to become degraded and an autophagy modifier of the MAP1 LC3 family; targets ubiquitin-coated bacteria (xenophagy) and appears to function in the same pathway as SQSTM1 and CALCOCO2/NDP52. In Rattus norvegicus (Rat), this protein is Optineurin (Optn).